The following is a 1185-amino-acid chain: 205 kDa microtubule-associated protein (1185 aa).

The span at 146-159 shows a compositional bias: low complexity; sequence EPNQLPEQLQQQQQ. Residues 146–196 are disordered; that stretch reads EPNQLPEQLQQQQQIESQGVHEDPRQEDEDEHSSVATTYGTSSLSENNSSP. Over residues 179-196 the composition is skewed to polar residues; it reads SVATTYGTSSLSENNSSP. 2 positions are modified to phosphoserine: serine 354 and serine 448. Tyrosine 450 is subject to Phosphotyrosine. Serine 709, serine 710, and serine 712 each carry phosphoserine. Threonine 721 bears the Phosphothreonine mark. The residue at position 728 (serine 728) is a Phosphoserine. Residues 745–977 are microtubule-binding; it reads TAADGQSISQ…ASTKVRPAAT (233 aa). Residues 856–866 are compositionally biased toward low complexity; sequence SIATKTSTTSS. 2 disordered regions span residues 856–1035 and 1054–1114; these read SIAT…TSTA and SASL…SSPA. Composition is skewed to polar residues over residues 867-881 and 908-936; these read LTGN…NVGS and TITN…STNA. At serine 874 the chain carries Phosphoserine. The segment covering 940–952 has biased composition (low complexity); the sequence is ATSGTGSVASSTA. Residues 989-999 are compositionally biased toward polar residues; that stretch reads PRSTISSTTTV. The span at 1003–1015 shows a compositional bias: low complexity; it reads PSTSTPSFSTRSP. Composition is skewed to polar residues over residues 1016-1026 and 1054-1066; these read NKQQSNGLGKN and SASL…STSR. Phosphoserine is present on residues serine 1075 and serine 1086. The segment covering 1100–1111 has biased composition (polar residues); it reads LTPQSKDGTAKS. Residue serine 1121 is modified to Phosphoserine.

The protein resides in the cytoplasm. It is found in the cytoskeleton. The protein localises to the spindle. Functionally, may play an important role in the regulation of microtubule assembly and interaction. The polypeptide is 205 kDa microtubule-associated protein (Map205) (Drosophila melanogaster (Fruit fly)).